The primary structure comprises 352 residues: Beta-1,4-xylanase (352 aa).

A signal peptide spans 1–23 (MINQRFSILVLLLILLTFSLGFL). Positions 29–352 (GMEIPSLKEV…KKAFWEIVKF (324 aa)) constitute a GH10 domain. The active-site Proton donor is the glutamate 155. The Nucleophile role is filled by glutamate 262.

Belongs to the glycosyl hydrolase 10 (cellulase F) family.

It localises to the secreted. It carries out the reaction Endohydrolysis of (1-&gt;4)-beta-D-xylosidic linkages in xylans.. Its pathway is glycan degradation; xylan degradation. In Dictyoglomus thermophilum, this protein is Beta-1,4-xylanase (xynA).